A 205-amino-acid chain; its full sequence is Protein TON_1965 (205 aa).

The region spanning 7–201 is the AMMECR1 domain; that stretch reads EWGEFLVRLA…EEYPKGPVKR (195 aa).

The sequence is that of Protein TON_1965 from Thermococcus onnurineus (strain NA1).